The sequence spans 387 residues: 4-hydroxy-3-methylbut-2-en-1-yl diphosphate synthase (flavodoxin) (387 aa).

[4Fe-4S] cluster-binding residues include C272, C275, C307, and E314.

The protein belongs to the IspG family. Requires [4Fe-4S] cluster as cofactor.

It carries out the reaction (2E)-4-hydroxy-3-methylbut-2-enyl diphosphate + oxidized [flavodoxin] + H2O + 2 H(+) = 2-C-methyl-D-erythritol 2,4-cyclic diphosphate + reduced [flavodoxin]. It functions in the pathway isoprenoid biosynthesis; isopentenyl diphosphate biosynthesis via DXP pathway; isopentenyl diphosphate from 1-deoxy-D-xylulose 5-phosphate: step 5/6. In terms of biological role, converts 2C-methyl-D-erythritol 2,4-cyclodiphosphate (ME-2,4cPP) into 1-hydroxy-2-methyl-2-(E)-butenyl 4-diphosphate. This Granulibacter bethesdensis (strain ATCC BAA-1260 / CGDNIH1) protein is 4-hydroxy-3-methylbut-2-en-1-yl diphosphate synthase (flavodoxin).